The chain runs to 135 residues: Nucleoside diphosphate kinase (135 aa).

The ATP site is built by lysine 11, phenylalanine 59, arginine 87, threonine 93, arginine 104, and asparagine 114. Residue histidine 117 is the Pros-phosphohistidine intermediate of the active site.

The protein belongs to the NDK family. As to quaternary structure, homotetramer. The cofactor is Mg(2+).

It localises to the cytoplasm. The catalysed reaction is a 2'-deoxyribonucleoside 5'-diphosphate + ATP = a 2'-deoxyribonucleoside 5'-triphosphate + ADP. It catalyses the reaction a ribonucleoside 5'-diphosphate + ATP = a ribonucleoside 5'-triphosphate + ADP. In terms of biological role, major role in the synthesis of nucleoside triphosphates other than ATP. The ATP gamma phosphate is transferred to the NDP beta phosphate via a ping-pong mechanism, using a phosphorylated active-site intermediate. The protein is Nucleoside diphosphate kinase of Marinomonas sp. (strain MWYL1).